A 555-amino-acid polypeptide reads, in one-letter code: WRKY transcription factor WRKY24 (555 aa).

2 disordered regions span residues 38-65 and 132-248; these read GGGGVSRYKAMTPPSLPLSPPPVSPSSF and QTAP…CTFP. Residues 51–61 are compositionally biased toward pro residues; the sequence is PSLPLSPPPVS. Residues 163–194 are compositionally biased toward low complexity; sequence QQQQQPWGYQQQPAGMDAGANAASFGAAPFQA. The segment at residues 214 to 278 is a DNA-binding region (WRKY 1); it reads SQRRSSDDGY…YKGTHNHAKP (65 aa). A Nuclear localization signal motif is present at residues 253 to 259; it reads KKKVERS. The disordered stretch occupies residues 270 to 367; that stretch reads KGTHNHAKPQ…EGISMAGNRT (98 aa). Composition is skewed to polar residues over residues 277–294 and 310–320; these read KPQNTRRNSGSSAAQVLQ and TAATPENSSAS. Residues 347–356 are compositionally biased toward basic and acidic residues; sequence DSKRWRKDGD. Residues 379 to 444 constitute a DNA-binding region (WRKY 2); that stretch reads SDIDILDDGY…YEGKHNHDVP (66 aa). The interval 466–555 is transcription repression of gibberellic acid (GA)-induced promoters; that stretch reads HPYLPNQPPP…DDMFFQNSLY (90 aa). 2 disordered regions span residues 471–498 and 513–555; these read NQPPPMSYQPTGPQPYALRPDGFGGQGP and GFDD…NSLY.

It belongs to the WRKY group II-a family. As to expression, expressed in aleurone cells. Mostly expressed in aleurone layers and leaves, and, to a lower extent, in roots, panicles and embryos.

The protein localises to the nucleus. Its function is as follows. Transcription repressor. Interacts specifically with the W box (5'-(T)TGAC[CT]-3'), a frequently occurring elicitor-responsive cis-acting element. Negative regulator of both gibberellic acid (GA) and abscisic acid (ABA) signaling in aleurone cells, probably by interfering with GAM1, via the specific repression of GA- and ABA-induced promoters. In Oryza sativa subsp. indica (Rice), this protein is WRKY transcription factor WRKY24.